The primary structure comprises 601 residues: Elongation factor 4 (601 aa).

The region spanning 5–187 (SNIRNFAIIA…AIVTKLPSPN (183 aa)) is the tr-type G domain. GTP-binding positions include 17-22 (DHGKST) and 134-137 (NKID).

Belongs to the TRAFAC class translation factor GTPase superfamily. Classic translation factor GTPase family. LepA subfamily.

The protein localises to the cell inner membrane. The catalysed reaction is GTP + H2O = GDP + phosphate + H(+). Required for accurate and efficient protein synthesis under certain stress conditions. May act as a fidelity factor of the translation reaction, by catalyzing a one-codon backward translocation of tRNAs on improperly translocated ribosomes. Back-translocation proceeds from a post-translocation (POST) complex to a pre-translocation (PRE) complex, thus giving elongation factor G a second chance to translocate the tRNAs correctly. Binds to ribosomes in a GTP-dependent manner. The protein is Elongation factor 4 of Orientia tsutsugamushi (strain Ikeda) (Rickettsia tsutsugamushi).